Reading from the N-terminus, the 635-residue chain is Probable serine/threonine-protein kinase DDB_G0270146 (635 aa).

The Protein kinase domain occupies 77–329 (VISDIAIGKG…AKELLSHPWI (253 aa)). ATP contacts are provided by residues 83-91 (IGKGAFATV) and K106. Residue D199 is the Proton acceptor of the active site. The span at 360–392 (SLLSNSSGGDDSVTDSDLSISNQSSRSSSFLLD) shows a compositional bias: low complexity. The segment at 360–405 (SLLSNSSGGDDSVTDSDLSISNQSSRSSSFLLDDGGGGGGSKNHTV) is disordered. 2 coiled-coil regions span residues 417-456 (IEFN…KYRE) and 536-585 (KKAL…KDSS). Over residues 540-582 (EAQKRREKEQEKLKEQEKLKEKKKEKDIKKEKDKKDKKDKQLK) the composition is skewed to basic and acidic residues. The segment at 540 to 635 (EAQKRREKEQ…GRSSSKIFNE (96 aa)) is disordered. Low complexity predominate over residues 583-598 (DSSSSTTTTNSTPSTP). The segment covering 626–635 (GRSSSKIFNE) has biased composition (polar residues).

It belongs to the protein kinase superfamily. STE Ser/Thr protein kinase family. It depends on Mg(2+) as a cofactor.

It catalyses the reaction L-seryl-[protein] + ATP = O-phospho-L-seryl-[protein] + ADP + H(+). The enzyme catalyses L-threonyl-[protein] + ATP = O-phospho-L-threonyl-[protein] + ADP + H(+). This chain is Probable serine/threonine-protein kinase DDB_G0270146, found in Dictyostelium discoideum (Social amoeba).